Reading from the N-terminus, the 259-residue chain is Electron transfer flavoprotein subunit beta (259 aa).

The protein belongs to the ETF beta-subunit/FixA family. As to quaternary structure, heterodimer of an alpha and a beta subunit. FAD serves as cofactor. It depends on AMP as a cofactor.

Functionally, the electron transfer flavoprotein serves as a specific electron acceptor for other dehydrogenases. It transfers the electrons to the main respiratory chain via ETF-ubiquinone oxidoreductase (ETF dehydrogenase). This Clostridium acetobutylicum (strain ATCC 824 / DSM 792 / JCM 1419 / IAM 19013 / LMG 5710 / NBRC 13948 / NRRL B-527 / VKM B-1787 / 2291 / W) protein is Electron transfer flavoprotein subunit beta (etfB).